The sequence spans 505 residues: Zinc metalloproteinase/disintegrin (505 aa).

Positions 1–20 (MIQVLLVIICLAAFPYQGTS) are cleaved as a signal peptide. Positions 21–214 (IILESGNVND…PIKKASQSNL (194 aa)) are excised as a propeptide. 2 consecutive repeat copies span residues 153 to 179 (KYED…YEPI) and 180 to 206 (KYED…YEPI). Positions 220–416 (RYIELVIVAD…QKPQCILNKP (197 aa)) constitute a Peptidase M12B domain. Positions 223 and 307 each coordinate Ca(2+). Histidine 356 contributes to the Zn(2+) binding site. Residue glutamate 357 is part of the active site. Zn(2+) is bound by residues histidine 360 and histidine 366. Disulfide bonds link cysteine 371-cysteine 395 and cysteine 373-cysteine 378. Residues cysteine 411 and asparagine 414 each coordinate Ca(2+). Positions 417 to 432 (LRTDTVSTPVSGNELL) are excised as a propeptide. Residues 424-505 (TPVSGNELLE…AGCPRNPFHA (82 aa)) form the Disintegrin domain. Cystine bridges form between cysteine 438–cysteine 453, cysteine 440–cysteine 448, cysteine 447–cysteine 470, cysteine 461–cysteine 467, cysteine 466–cysteine 491, and cysteine 479–cysteine 498. The Cell attachment site motif lies at 483–485 (RGD).

The protein belongs to the venom metalloproteinase (M12B) family. P-II subfamily. P-IIa sub-subfamily. In terms of assembly, monomer. The cofactor is Zn(2+). Expressed by the venom gland.

The protein resides in the secreted. Its function is as follows. Impairs hemostasis in the envenomed animal. In terms of biological role, inhibits platelet aggregation induced by ADP, thrombin, platelet-activating factor and collagen. Acts by inhibiting fibrinogen interaction with platelet receptors GPIIb/GPIIIa (ITGA2B/ITGB3). The polypeptide is Zinc metalloproteinase/disintegrin (Gloydius brevicauda (Korean slamosa snake)).